A 268-amino-acid chain; its full sequence is MSGSVIHSQSAVMVPAVYSAGQPASLPVAIDYPAALALRQMSMVHDELPKYLLAPEVSALLHYVPDLHRKMLLATLWNTGARINEALALTRGDFSLAPPYPFVQLATLKQRTEKAARTAGRMPAGQQTHRLVPLSDSWYVSQLQTMVAQLKIPMERRNRRTGRTEKARIWEVTDRTVRTWIGEAVAAAAADGVTFSVPVTPHTFRHSYAMHMLYAGIPLKVLQSLMGHKSISSTEVYTKVFALDVAARHRVQFAMPESDAVAMLKQLS.

The Tyr recombinase domain maps to 47–250 (ELPKYLLAPE…FALDVAARHR (204 aa)). Residues Arg82, Lys114, His202, Arg205, and His228 contribute to the active site. Catalysis depends on Tyr237, which acts as the O-(3'-phospho-DNA)-tyrosine intermediate.

It belongs to the 'phage' integrase family.

Functionally, acts as a repressor of transcription and as a site-specific resolvase that cleaves at the RfsF site. The polypeptide is Resolvase (resD) (Escherichia coli (strain K12)).